Here is a 594-residue protein sequence, read N- to C-terminus: MTTGSALYIPPYKADDQDVVVELNNRFGAEAFTAQPTRTGMPVLWVARAKLVEVLTFLRNLPKPYVMLYDLHGVDERLRTKRQGLPSGADFTVFYHLMSLERNSDVMIKVALSESDLSLPTVTSIWPNANWYEREVWDMYGIDFKGHPHLSRIMMPPTWEGHPLRKDFPARATEFDPFSLNLAKQQLEEEAARFRPEDWGMKRSGANEDYMFLNLGPNHPSAHGAFRIILQLDGEEIVDCVPDIGYHHRGAEKMAERQSWHSFIPYTDRIDYLGGVMNNLPYVLSVEKLAGIKVPEKVDVIRIMMAEFFRITSHLLFLGTYIQDVGAMTPVFFTFTDRQKAYTVIEAITGFRLHPAWYRIGGVAHDLPRGWEKLVKDFVEWLPKRLDEYTKAALQNSILKGRTIGVAQYNTKEALEWGVTGAGLRSTGCDFDLRKARPYSGYENFEFEVPLAANGDAYDRCMVRVEEMRQSVKIIDQCLRNMPEGPYKADHPLTTPPPKERTLQHIETLITHFLQVSWGPVMPANESFQMIEATKGINSYYLTSDGGTMSYRTRIRTPSFAHLQQIPSVIKGSMVADLIAYLGSIDFVMADVDR.

Residues 1 to 185 (MTTGSALYIP…DPFSLNLAKQ (185 aa)) form an NADH dehydrogenase I subunit C region. The NADH dehydrogenase I subunit D stretch occupies residues 209–594 (DYMFLNLGPN…IDFVMADVDR (386 aa)).

This sequence in the N-terminal section; belongs to the complex I 30 kDa subunit family. The protein in the C-terminal section; belongs to the complex I 49 kDa subunit family. As to quaternary structure, NDH-1 is composed of 13 different subunits. Subunits NuoB, CD, E, F, and G constitute the peripheral sector of the complex.

It is found in the cell inner membrane. The catalysed reaction is a quinone + NADH + 5 H(+)(in) = a quinol + NAD(+) + 4 H(+)(out). Its function is as follows. NDH-1 shuttles electrons from NADH, via FMN and iron-sulfur (Fe-S) centers, to quinones in the respiratory chain. The immediate electron acceptor for the enzyme in this species is believed to be ubiquinone. Couples the redox reaction to proton translocation (for every two electrons transferred, four hydrogen ions are translocated across the cytoplasmic membrane), and thus conserves the redox energy in a proton gradient. In Pseudomonas fluorescens (strain Pf0-1), this protein is NADH-quinone oxidoreductase subunit C/D.